The primary structure comprises 417 residues: Arginine biosynthesis bifunctional protein ArgJ (417 aa).

Residues threonine 162, lysine 188, threonine 199, glutamate 289, asparagine 412, and serine 417 each coordinate substrate. Threonine 199 functions as the Nucleophile in the catalytic mechanism.

It belongs to the ArgJ family. As to quaternary structure, heterotetramer of two alpha and two beta chains.

The protein localises to the cytoplasm. It catalyses the reaction N(2)-acetyl-L-ornithine + L-glutamate = N-acetyl-L-glutamate + L-ornithine. It carries out the reaction L-glutamate + acetyl-CoA = N-acetyl-L-glutamate + CoA + H(+). The protein operates within amino-acid biosynthesis; L-arginine biosynthesis; L-ornithine and N-acetyl-L-glutamate from L-glutamate and N(2)-acetyl-L-ornithine (cyclic): step 1/1. It participates in amino-acid biosynthesis; L-arginine biosynthesis; N(2)-acetyl-L-ornithine from L-glutamate: step 1/4. In terms of biological role, catalyzes two activities which are involved in the cyclic version of arginine biosynthesis: the synthesis of N-acetylglutamate from glutamate and acetyl-CoA as the acetyl donor, and of ornithine by transacetylation between N(2)-acetylornithine and glutamate. The chain is Arginine biosynthesis bifunctional protein ArgJ from Nitrobacter winogradskyi (strain ATCC 25391 / DSM 10237 / CIP 104748 / NCIMB 11846 / Nb-255).